The sequence spans 512 residues: tRNA-2-methylthio-N(6)-dimethylallyladenosine synthase (512 aa).

The 117-residue stretch at 17-133 folds into the MTTase N-terminal domain; sequence RTYEVRTFGC…LPTLLERSAH (117 aa). Residues Cys-26, Cys-62, Cys-96, Cys-170, Cys-174, and Cys-177 each contribute to the [4Fe-4S] cluster site. In terms of domain architecture, Radical SAM core spans 156–392; the sequence is RESAYAGWVS…LALQERISEE (237 aa). One can recognise a TRAM domain in the interval 395–461; the sequence is RKLIGTTQEL…PHFLIADGGV (67 aa). The segment at 473–512 is disordered; the sequence is TELGETPTTAPVGVGLGMPSIKKPEPTTAGGCSTGGCGCE.

This sequence belongs to the methylthiotransferase family. MiaB subfamily. Monomer. [4Fe-4S] cluster is required as a cofactor.

Its subcellular location is the cytoplasm. The catalysed reaction is N(6)-dimethylallyladenosine(37) in tRNA + (sulfur carrier)-SH + AH2 + 2 S-adenosyl-L-methionine = 2-methylsulfanyl-N(6)-dimethylallyladenosine(37) in tRNA + (sulfur carrier)-H + 5'-deoxyadenosine + L-methionine + A + S-adenosyl-L-homocysteine + 2 H(+). Catalyzes the methylthiolation of N6-(dimethylallyl)adenosine (i(6)A), leading to the formation of 2-methylthio-N6-(dimethylallyl)adenosine (ms(2)i(6)A) at position 37 in tRNAs that read codons beginning with uridine. The sequence is that of tRNA-2-methylthio-N(6)-dimethylallyladenosine synthase from Corynebacterium jeikeium (strain K411).